The sequence spans 403 residues: Solanesyl-diphosphate synthase 2, chloroplastic (403 aa).

The N-terminal 62 residues, 1–62, are a transit peptide targeting the chloroplast; that stretch reads MLSVSCPRVY…QPGLAAVDVP (62 aa). Isopentenyl diphosphate contacts are provided by Lys-123, Arg-126, and His-161. Mg(2+) contacts are provided by Asp-168 and Asp-172. Position 177 (Arg-177) interacts with an all-trans-polyprenyl diphosphate. Arg-178 serves as a coordination point for isopentenyl diphosphate. Residues Lys-254, Thr-255, Gln-292, and Lys-309 each contribute to the an all-trans-polyprenyl diphosphate site.

The protein belongs to the FPP/GGPP synthase family. As to quaternary structure, homodimer. Interacts with FBN5. It depends on Mg(2+) as a cofactor. As to expression, expressed in leaves, stems and roots. Highest expression in leaves and roots.

The protein resides in the plastid. It is found in the chloroplast. It carries out the reaction 7 isopentenyl diphosphate + (2E)-geranyl diphosphate = all-trans-nonaprenyl diphosphate + 7 diphosphate. In terms of biological role, involved in providing solanesyl diphosphate for plastoquinone-9 (PQ-9) formation. Geranyl diphosphate is the preferred substrate. In Oryza sativa subsp. japonica (Rice), this protein is Solanesyl-diphosphate synthase 2, chloroplastic.